The sequence spans 957 residues: Calsyntenin-3 (957 aa).

The signal sequence occupies residues 1–19 (MTLLLVSLLLASLLQISSG). Residues 1–21 (MTLLLVSLLLASLLQISSGNK) are Cytoplasmic-facing. Topologically, residues 20–848 (NKANKHKPWI…SHRNSMVPSA (829 aa)) are extracellular. Positions 22–42 (ANKHKPWIEAEYQGIVMENDN) form an intramembrane region, helical. Cadherin domains lie at 29–145 (IEAE…APVF) and 146–246 (VERL…KPSW). At 43-73 (TVLLNPPLFALDKDAPLRYAGEICGFRLHGS) the chain is on the cytoplasmic side. The segment at residues 74–94 (GVPFKAVILDKATGEGLIRAK) is an intramembrane region (helical). The Cytoplasmic portion of the chain corresponds to 95 to 139 (EPVDCEAQKEHTFTTQAYDCVDGPDGANTKKSHKATVHVRVNDVN). The helical intramembrane region spans 140 to 160 (EFAPVFVERLYRAAVTEGKLY). The Cytoplasmic portion of the chain corresponds to 161–248 (DRILRVEAID…KPTCKPSWQG (88 aa)). A helical transmembrane segment spans residues 249-269 (WNKRIEYAPGAGSLALFPGIR). The Lumenal segment spans residues 270 to 357 (LETCDEPLWN…GTQAVQVPLG (88 aa)). N-linked (GlcNAc...) asparagine glycans are attached at residues Asn299, Asn327, Asn347, Asn508, and Asn741. Residues 849 to 869 (ATLIIVVCVGFLVLMVILGLV) traverse the membrane as a helical segment. Residues 870 to 957 (RIHSLHRRVS…RIIESPPHRY (88 aa)) are Cytoplasmic-facing. The interval 916-957 (QQTGVAGVAGGQQEEEDSSDSEAADSPSSDERRIIESPPHRY) is disordered. Residues 928–938 (QEEEDSSDSEA) show a composition bias toward acidic residues. Positions 944–957 (SDERRIIESPPHRY) are enriched in basic and acidic residues.

This sequence belongs to the calsyntenin family. As to quaternary structure, interacts (via cadherin domains) with both alpha and beta isoforms of neurexins (NRXN1, NRXN2 and NRXN3). Directly interacts with APBA2. Forms a tripartite complex with APBA2 and APP. Interacts with low affinity with KLC1. Interacts with SLC23A2/SVCT2. Interacts with CIDEA; inhibiting the lipid transferase activity of CIDEA. Interacts with CIDEC; inhibiting the lipid transferase activity of CIDEC. In terms of processing, proteolytically processed under normal cellular conditions. A primary zeta-cleavage generates a large extracellular (soluble) N-terminal domain (sAlc) and a short C-terminal transmembrane fragment (CTF1). A secondary cleavage catalyzed by gamma-secretase within the transmembrane domain releases the beta-Alc-beta chain in the extracellular milieu and produces an intracellular fragment (AlcICD). This processing is strongly suppressed in the tripartite complex formed with APBA2 and APP, which seems to prevent the association with gamma-secretase. Ubiquitinated: endoplasmic reticulum-localized protein is ubiquitinated and degraded by the endoplasmic reticulum-associated degradation (ERAD) pathway.

Its subcellular location is the postsynaptic cell membrane. It is found in the endoplasmic reticulum membrane. It localises to the golgi apparatus membrane. The protein resides in the cell projection. The protein localises to the dendrite. Its subcellular location is the lipid droplet. Functionally, postsynaptic adhesion molecule that binds to presynaptic neurexins to mediate both excitatory and inhibitory synapse formation. Promotes synapse development by acting as a cell adhesion molecule at the postsynaptic membrane, which associates with both neurexin-alpha and neurexin-beta proteins at the presynaptic membrane. Regulates the balance between excitatory and inhibitory synapses by inhibiting formation of excitatory parallel-fiber synapses and promoting formation of inhibitory synapses in the same neuron. May also be involved in ascorbate (vitamin C) uptake via its interaction with SLC23A2/SVCT2. Complex formation with APBA2 and APP, stabilizes APP metabolism and enhances APBA2-mediated suppression of beta-APP40 secretion, due to the retardation of intracellular APP maturation. Its function is as follows. Adipose-specific isoform that plays a key role in adaptive thermogenesis. Facilitates the efficient use of stored triglyceride by promoting multilocular morphology of thermogenic adipocytes: acts by inhibiting the activity of CIDEA and CIDEC on lipid droplets, thereby preventing lipid droplet fusion and facilitating lipid utilization. May also participate in adaptive thermogenesis by promoting sympathetic innervation of thermogenic adipose tissue: acts by driving secretion of neurotrophic factor S100B from brown adipocytes, stimulating neurite outgrowth from sympathetic neurons. In Rattus norvegicus (Rat), this protein is Calsyntenin-3.